The sequence spans 148 residues: Puroindoline-A (148 aa).

The signal sequence occupies residues Met1–Ala19. Residues Gln20 to Tyr28 constitute a propeptide that is removed on maturation. The propeptide at Tyr147 to Trp148 is removed in mature form.

Post-translationally, five disulfide bonds are present. In terms of tissue distribution, endosperm and aleurone layer of developing kernels. In the aleurone layer, mainly localized to starch granules and the surface of the plasma membrane, forming a uniform layer, also abundant in the intercellular space. In the endosperm, mainly localized to starch granules and the plasma membrane, but less abundant in the intercellular space. Not found in roots or coleoptiles.

It localises to the membrane. Its subcellular location is the secreted. The protein resides in the extracellular space. Acts as a membranotoxin, probably through its antibacterial and antifungal activities, contributing to the defense mechanism of the plant against predators. Forms monovalent cation-selective ion channels in membranes. Has antibacterial activity against the Gram-positive bacteria S.aureus and C.michiganensis, and the Gram-negative bacteria E.coli, P.syringae pv phaseoli, A.tumefaciens and E.carotovora subsp carotovora. Acts synergistically with PINB against bacteria. Contributes to grain texture and hardness. This Triticum aestivum (Wheat) protein is Puroindoline-A (PINA).